The following is a 381-amino-acid chain: Dof zinc finger protein 2 (381 aa).

Residues 19–81 form a disordered region; the sequence is MLMGANPNPN…ARPQKEKALN (63 aa). 2 stretches are compositionally biased toward low complexity: residues 23-32 and 40-59; these read ANPNPNGSSN and SAAS…AAGA. The span at 68 to 79 shows a compositional bias: basic and acidic residues; sequence TERRARPQKEKA. The segment at 80–134 adopts a Dof-type zinc-finger fold; it reads LNCPRCNSTNTKFCYYNNYSLQQPRYFCKTCRRYWTEGGSLRNVPVGGGSRKNKR. Positions 82, 85, 107, and 110 each coordinate Zn(2+). A disordered region spans residues 329 to 349; that stretch reads AGDANSGGDHQYDHGKNQGGG.

The protein localises to the nucleus. In terms of biological role, transcription factor that may transactivate seed storage protein genes in developing seeds. The chain is Dof zinc finger protein 2 from Oryza sativa subsp. japonica (Rice).